Consider the following 643-residue polypeptide: COP9 signalosome complex subunit 10 (643 aa).

Positions 1–33 are enriched in acidic residues; it reads MTDESDNYNDFMMSDEDMDSIEMEDEENDVEGD. Positions 1-37 are disordered; sequence MTDESDNYNDFMMSDEDMDSIEMEDEENDVEGDEGQR. The 187-residue stretch at 331–517 folds into the PCI domain; it reads CKEEFWECLK…DTVTFYSEQH (187 aa). Residues 573–584 show a composition bias toward polar residues; sequence DSQSHSKSNTKS. The disordered stretch occupies residues 573–594; the sequence is DSQSHSKSNTKSMSRHVSGHDP.

As to quaternary structure, component of a COP9 signalosome-like (CSN) complex.

Its subcellular location is the cytoplasm. It is found in the nucleus. In terms of biological role, component of the COP9 signalosome (CSN) complex that acts as an regulator of the ubiquitin (Ubl) conjugation pathway by mediating the deneddylation of the cullin subunit of SCF-type E3 ubiquitin-protein ligase complexes. The CSN complex is involved in the regulation of the mating pheromone response. The sequence is that of COP9 signalosome complex subunit 10 (RRI2) from Candida glabrata (strain ATCC 2001 / BCRC 20586 / JCM 3761 / NBRC 0622 / NRRL Y-65 / CBS 138) (Yeast).